The chain runs to 180 residues: Mitochondrial inner membrane protease subunit 2 (180 aa).

Residues 19-39 (LVGITLWVPVLMFVEQHVVSV) form a helical membrane-spanning segment. Active-site residues include serine 46 and lysine 92.

The protein belongs to the peptidase S26 family. IMP2 subfamily. In terms of assembly, heterodimer of 2 subunits, imp1 and imp2.

Its subcellular location is the mitochondrion inner membrane. Catalyzes the removal of transit peptides required for the targeting of proteins from the mitochondrial matrix, across the inner membrane, into the inter-membrane space. The polypeptide is Mitochondrial inner membrane protease subunit 2 (Schizosaccharomyces pombe (strain 972 / ATCC 24843) (Fission yeast)).